We begin with the raw amino-acid sequence, 128 residues long: Ribosome-binding factor A (128 aa).

The protein belongs to the RbfA family. In terms of assembly, monomer. Binds 30S ribosomal subunits, but not 50S ribosomal subunits or 70S ribosomes.

It localises to the cytoplasm. In terms of biological role, one of several proteins that assist in the late maturation steps of the functional core of the 30S ribosomal subunit. Associates with free 30S ribosomal subunits (but not with 30S subunits that are part of 70S ribosomes or polysomes). Required for efficient processing of 16S rRNA. May interact with the 5'-terminal helix region of 16S rRNA. The sequence is that of Ribosome-binding factor A from Geobacillus thermodenitrificans (strain NG80-2).